Here is a 510-residue protein sequence, read N- to C-terminus: ATP synthase subunit alpha (510 aa).

169–176 contacts ATP; the sequence is GDRQTGKT.

This sequence belongs to the ATPase alpha/beta chains family. F-type ATPases have 2 components, CF(1) - the catalytic core - and CF(0) - the membrane proton channel. CF(1) has five subunits: alpha(3), beta(3), gamma(1), delta(1), epsilon(1). CF(0) has four main subunits: a(1), b(1), b'(1) and c(9-12).

The protein resides in the cell inner membrane. The catalysed reaction is ATP + H2O + 4 H(+)(in) = ADP + phosphate + 5 H(+)(out). Functionally, produces ATP from ADP in the presence of a proton gradient across the membrane. The alpha chain is a regulatory subunit. This chain is ATP synthase subunit alpha, found in Rhodopseudomonas palustris (strain ATCC BAA-98 / CGA009).